A 221-amino-acid polypeptide reads, in one-letter code: Immediate early response gene 2 protein (221 aa).

Met1 bears the N-acetylmethionine mark. The interval 105-155 (ETPALCDPPPARVSRKRRSSSDLSDGSDAGLVPSKKARLEEVEGEATSEVP) is disordered. Positions 125–136 (SDLSDGSDAGLV) are enriched in low complexity.

The protein belongs to the IER family.

Its subcellular location is the cytoplasm. The protein localises to the nucleus. Its function is as follows. DNA-binding protein that seems to act as a transcription factor. Involved in the regulation of neuronal differentiation, acts upon JNK-signaling pathway activation and plays a role in neurite outgrowth in hippocampal cells. May mediate with FIBP FGF-signaling in the establishment of laterality in the embryo. Promotes cell motility, seems to stimulate tumor metastasis. The chain is Immediate early response gene 2 protein (Ier2) from Mus musculus (Mouse).